Consider the following 403-residue polypeptide: Zinc finger HIT domain-containing protein 2 (403 aa).

An N-acetylmethionine modification is found at Met1. Zn(2+) is bound by residues Cys7, Cys10, Cys22, Cys25, Cys30, Cys34, His38, and Cys41. Residues 7–41 (CGFCPAGEVQPARYTCPRCNAPYCSLRCYRTHGTC) form an HIT-type zinc finger. The tract at residues 72 to 98 (RQQRETEDEPGEAGLSSGPAPGGLSGL) is disordered. Thr161 bears the Phosphothreonine mark.

Interacts (via HIT-type zinc finger) with RUVBL2 in the presence of ATP or ADP; shows a stronger interaction in the presence of ADP. In terms of tissue distribution, low expression in most tissues; highly expressed in testis.

Functionally, may act as a bridging factor mediating the interaction between the R2TP/Prefoldin-like (R2TP/PFDL) complex and U5 small nuclear ribonucleoprotein (U5 snRNP). Required for the interaction of R2TP complex subunit RPAP3 and prefoldin-like subunit URI1 with U5 snRNP proteins EFTUD2 and PRPF8. May play a role in regulating the composition of the U5 snRNP complex. The protein is Zinc finger HIT domain-containing protein 2 (ZNHIT2) of Homo sapiens (Human).